A 175-amino-acid polypeptide reads, in one-letter code: Gamma-crystallin-1 (175 aa).

Beta/gamma crystallin 'Greek key' domains lie at 2 to 40 (GKIF…RVEG) and 41 to 83 (GNWI…RFLP). Residues 84–88 (NYQGQ) form a connecting peptide region. 2 consecutive Beta/gamma crystallin 'Greek key' domains span residues 89–129 (YKMR…NVFD) and 130–172 (GHWM…RRVY).

This sequence belongs to the beta/gamma-crystallin family. In terms of assembly, monomer.

Functionally, crystallins are the dominant structural components of the vertebrate eye lens. The sequence is that of Gamma-crystallin-1 (cryg1) from Xenopus laevis (African clawed frog).